The chain runs to 237 residues: 2-C-methyl-D-erythritol 4-phosphate cytidylyltransferase (237 aa).

The protein belongs to the IspD/TarI cytidylyltransferase family. IspD subfamily.

It catalyses the reaction 2-C-methyl-D-erythritol 4-phosphate + CTP + H(+) = 4-CDP-2-C-methyl-D-erythritol + diphosphate. The protein operates within isoprenoid biosynthesis; isopentenyl diphosphate biosynthesis via DXP pathway; isopentenyl diphosphate from 1-deoxy-D-xylulose 5-phosphate: step 2/6. Its function is as follows. Catalyzes the formation of 4-diphosphocytidyl-2-C-methyl-D-erythritol from CTP and 2-C-methyl-D-erythritol 4-phosphate (MEP). This chain is 2-C-methyl-D-erythritol 4-phosphate cytidylyltransferase, found in Vibrio vulnificus (strain CMCP6).